The following is a 332-amino-acid chain: Aerobic cobaltochelatase subunit CobS (332 aa).

In terms of assembly, heterotrimer of CobN, CobS and CobT.

Its subcellular location is the cytoplasm. It carries out the reaction hydrogenobyrinate a,c-diamide + Co(2+) + ATP + H2O = cob(II)yrinate a,c diamide + ADP + phosphate + 5 H(+). The protein operates within cofactor biosynthesis; adenosylcobalamin biosynthesis; cob(II)yrinate a,c-diamide from precorrin-2 (aerobic route): step 10/10. Catalyzes cobalt insertion in the corrin ring. The protein is Aerobic cobaltochelatase subunit CobS (cobS) of Sinorhizobium sp.